A 102-amino-acid polypeptide reads, in one-letter code: YcgL domain-containing protein MS1047 (102 aa).

The region spanning 1–85 is the YcgL domain; sequence MLCAIYKSKK…KQESLFEQFK (85 aa).

The protein is YcgL domain-containing protein MS1047 of Mannheimia succiniciproducens (strain KCTC 0769BP / MBEL55E).